Consider the following 280-residue polypeptide: Tryptophan 2,3-dioxygenase (280 aa).

Residues 49–53, Tyr-111, and Arg-115 each bind substrate; that span reads FIIIH. His-238 contributes to the heme binding site. Residue Thr-252 coordinates substrate.

The protein belongs to the tryptophan 2,3-dioxygenase family. As to quaternary structure, homotetramer. Requires heme as cofactor.

The catalysed reaction is L-tryptophan + O2 = N-formyl-L-kynurenine. Its pathway is amino-acid degradation; L-tryptophan degradation via kynurenine pathway; L-kynurenine from L-tryptophan: step 1/2. Functionally, heme-dependent dioxygenase that catalyzes the oxidative cleavage of the L-tryptophan (L-Trp) pyrrole ring and converts L-tryptophan to N-formyl-L-kynurenine. Catalyzes the oxidative cleavage of the indole moiety. This chain is Tryptophan 2,3-dioxygenase, found in Geobacillus thermodenitrificans (strain NG80-2).